The sequence spans 220 residues: Serine protease-like protein 51 (220 aa).

The signal sequence occupies residues 1-16 (MFQLLIPLLLALKGHA). Residues 23 to 220 (VQCGHRPAFP…SSKWVSSVGA (198 aa)) enclose the Peptidase S1 domain. An N-linked (GlcNAc...) asparagine glycan is attached at Asn-33. Cys-64 and Cys-80 are disulfide-bonded. N-linked (GlcNAc...) asparagine glycosylation occurs at Asn-92. A disulfide bond links Cys-157 and Cys-170.

The protein belongs to the peptidase S1 family.

Its subcellular location is the secreted. The sequence is that of Serine protease-like protein 51 from Homo sapiens (Human).